The primary structure comprises 324 residues: Holliday junction branch migration complex subunit RuvB (324 aa).

The segment at 1 to 180 (MKSISCGKEY…FGIPLHLEFY (180 aa)) is large ATPase domain (RuvB-L). Residues Ile-19, Arg-20, Gly-61, Lys-64, Thr-65, Thr-66, 127–129 (EDF), Arg-170, Tyr-180, and Arg-217 contribute to the ATP site. Thr-65 provides a ligand contact to Mg(2+). Residues 181 to 251 (SFEELVNIIK…VADSVLLKLG (71 aa)) form a small ATPAse domain (RuvB-S) region. The segment at 254–324 (KMGLNKLDMN…TDQAKEYLSL (71 aa)) is head domain (RuvB-H). DNA-binding residues include Arg-307 and Arg-312.

The protein belongs to the RuvB family. Homohexamer. Forms an RuvA(8)-RuvB(12)-Holliday junction (HJ) complex. HJ DNA is sandwiched between 2 RuvA tetramers; dsDNA enters through RuvA and exits via RuvB. An RuvB hexamer assembles on each DNA strand where it exits the tetramer. Each RuvB hexamer is contacted by two RuvA subunits (via domain III) on 2 adjacent RuvB subunits; this complex drives branch migration. In the full resolvosome a probable DNA-RuvA(4)-RuvB(12)-RuvC(2) complex forms which resolves the HJ.

It localises to the cytoplasm. It catalyses the reaction ATP + H2O = ADP + phosphate + H(+). Its function is as follows. The RuvA-RuvB-RuvC complex processes Holliday junction (HJ) DNA during genetic recombination and DNA repair, while the RuvA-RuvB complex plays an important role in the rescue of blocked DNA replication forks via replication fork reversal (RFR). RuvA specifically binds to HJ cruciform DNA, conferring on it an open structure. The RuvB hexamer acts as an ATP-dependent pump, pulling dsDNA into and through the RuvAB complex. RuvB forms 2 homohexamers on either side of HJ DNA bound by 1 or 2 RuvA tetramers; 4 subunits per hexamer contact DNA at a time. Coordinated motions by a converter formed by DNA-disengaged RuvB subunits stimulates ATP hydrolysis and nucleotide exchange. Immobilization of the converter enables RuvB to convert the ATP-contained energy into a lever motion, pulling 2 nucleotides of DNA out of the RuvA tetramer per ATP hydrolyzed, thus driving DNA branch migration. The RuvB motors rotate together with the DNA substrate, which together with the progressing nucleotide cycle form the mechanistic basis for DNA recombination by continuous HJ branch migration. Branch migration allows RuvC to scan DNA until it finds its consensus sequence, where it cleaves and resolves cruciform DNA. The protein is Holliday junction branch migration complex subunit RuvB of Wolbachia sp. subsp. Drosophila simulans (strain wRi).